The primary structure comprises 238 residues: Ribitol-5-phosphate cytidylyltransferase (238 aa).

CTP-binding positions include 7 to 10 (FAGG) and 80 to 86 (GETGQES).

The protein belongs to the IspD/TarI cytidylyltransferase family. TarI subfamily.

It carries out the reaction D-ribitol 5-phosphate + CTP + H(+) = CDP-L-ribitol + diphosphate. Its function is as follows. Catalyzes the transfer of the cytidylyl group of CTP to D-ribitol 5-phosphate. This Vibrio parahaemolyticus serotype O3:K6 (strain RIMD 2210633) protein is Ribitol-5-phosphate cytidylyltransferase.